Reading from the N-terminus, the 600-residue chain is Dihydroxy-acid dehydratase (600 aa).

A Mg(2+)-binding site is contributed by Asp82. Cys123 is a binding site for [2Fe-2S] cluster. Residues Asp124 and Lys125 each contribute to the Mg(2+) site. An N6-carboxylysine modification is found at Lys125. Residue Cys192 participates in [2Fe-2S] cluster binding. Glu489 contacts Mg(2+). Catalysis depends on Ser515, which acts as the Proton acceptor.

It belongs to the IlvD/Edd family. In terms of assembly, homodimer. The cofactor is [2Fe-2S] cluster. Mg(2+) is required as a cofactor.

The enzyme catalyses (2R)-2,3-dihydroxy-3-methylbutanoate = 3-methyl-2-oxobutanoate + H2O. It carries out the reaction (2R,3R)-2,3-dihydroxy-3-methylpentanoate = (S)-3-methyl-2-oxopentanoate + H2O. The protein operates within amino-acid biosynthesis; L-isoleucine biosynthesis; L-isoleucine from 2-oxobutanoate: step 3/4. It functions in the pathway amino-acid biosynthesis; L-valine biosynthesis; L-valine from pyruvate: step 3/4. Its function is as follows. Functions in the biosynthesis of branched-chain amino acids. Catalyzes the dehydration of (2R,3R)-2,3-dihydroxy-3-methylpentanoate (2,3-dihydroxy-3-methylvalerate) into 2-oxo-3-methylpentanoate (2-oxo-3-methylvalerate) and of (2R)-2,3-dihydroxy-3-methylbutanoate (2,3-dihydroxyisovalerate) into 2-oxo-3-methylbutanoate (2-oxoisovalerate), the penultimate precursor to L-isoleucine and L-valine, respectively. In Bacteroides fragilis (strain YCH46), this protein is Dihydroxy-acid dehydratase.